A 395-amino-acid chain; its full sequence is Bifunctional fatty acid conjugase/Delta(12)-oleate desaturase (395 aa).

2 helical membrane passes run 73–93 (FALA…LPKP) and 97–117 (MAWP…WVIA). The Histidine box-1 motif lies at 118-122 (HECGH). A helical transmembrane segment spans residues 130-150 (WVNDAVGFFLHTSLLVPYFPF). The Histidine box-2 motif lies at 154-158 (HRRHH). The next 3 helical transmembrane spans lie at 192-212 (VLTL…FNAS), 236-256 (FWVH…YRLA), and 264-284 (LLSI…LITF). Residues 328 to 332 (HVIHH) carry the Histidine box-3 motif.

It belongs to the fatty acid desaturase type 1 family.

Its subcellular location is the membrane. It catalyses the reaction a (9Z,12Z)-octadecadienoyl-containing glycerolipid + 2 Fe(II)-[cytochrome b5] + O2 + 2 H(+) = a (9Z,11E,13Z)-octadeca-9,11,13-trienoyl-containing glycerolipid + 2 Fe(III)-[cytochrome b5] + 2 H2O. It functions in the pathway lipid metabolism; polyunsaturated fatty acid biosynthesis. Its function is as follows. Converts a single cis double bond at position 12 of linoleate incorporated into phosphatidylcholine into conjugated 11-trans and 13-cis double bonds. Produces punicic acid (18:3(9Z,11E,13Z)) from linoleic acid and conjugated octadecatetraenoic fatty acid from gamma-linolenic acid. No activity with cis- and trans-vaccenic acid, alpha-linolenic acid or homo-gamma-linolenic acid. 16:2(9Z,12Z), 18:3(9Z,12Z,15Z) and 18:2(9Z,12Z) are substrates for the conjugase to form trans-Delta(11) and cis-Delta(13) double bonds. No activity on the cis-Delta(9) double bonds of oleic and palmitoleic acids. The polypeptide is Bifunctional fatty acid conjugase/Delta(12)-oleate desaturase (Punica granatum (Pomegranate)).